The following is a 33-amino-acid chain: Beta-amanitin proprotein (33 aa).

The propeptide occupies 1–10 (MSDINATRLP). Positions 11–18 (IWGIGCDP) form a cross-link, cyclopeptide (Ile-Pro). Residues 12-16 (WGIGC) constitute a cross-link (2'-cysteinyl-6'-hydroxytryptophan sulfoxide (Trp-Cys)). Positions 19 to 33 (CVGDDVAALTTRGEA) are excised as a propeptide.

This sequence belongs to the MSDIN fungal toxin family. In terms of processing, processed by the macrocyclase-peptidase enzyme POPB to yield a toxic cyclic decapeptide. POPB first removes 10 residues from the N-terminus. Conformational trapping of the remaining peptide forces the enzyme to release this intermediate rather than proceed to macrocyclization. The enzyme rebinds the remaining peptide in a different conformation and catalyzes macrocyclization of the N-terminal 8 residues.

Functionally, toxin belonging to the bicyclic octapeptides amatoxins that acts by binding non-competitively to RNA polymerase II and greatly slowing the elongation of transcripts from target promoters. The sequence is that of Beta-amanitin proprotein from Amanita rimosa.